Here is a 254-residue protein sequence, read N- to C-terminus: Type III pantothenate kinase (254 aa).

6–13 contributes to the ATP binding site; sequence DVGNSNIV. Substrate-binding positions include tyrosine 100 and 107–110; that span reads GADR. The Proton acceptor role is filled by aspartate 109. Residue aspartate 129 participates in K(+) binding. Threonine 132 provides a ligand contact to ATP. Threonine 184 is a binding site for substrate.

Belongs to the type III pantothenate kinase family. As to quaternary structure, homodimer. NH4(+) is required as a cofactor. Requires K(+) as cofactor.

Its subcellular location is the cytoplasm. The catalysed reaction is (R)-pantothenate + ATP = (R)-4'-phosphopantothenate + ADP + H(+). Its pathway is cofactor biosynthesis; coenzyme A biosynthesis; CoA from (R)-pantothenate: step 1/5. Functionally, catalyzes the phosphorylation of pantothenate (Pan), the first step in CoA biosynthesis. The chain is Type III pantothenate kinase from Geobacter sp. (strain M21).